A 72-amino-acid chain; its full sequence is Large ribosomal subunit protein bL31 (72 aa).

Residues cysteine 16, cysteine 18, cysteine 38, and cysteine 41 each coordinate Zn(2+).

The protein belongs to the bacterial ribosomal protein bL31 family. Type A subfamily. In terms of assembly, part of the 50S ribosomal subunit. Requires Zn(2+) as cofactor.

Functionally, binds the 23S rRNA. This chain is Large ribosomal subunit protein bL31, found in Beutenbergia cavernae (strain ATCC BAA-8 / DSM 12333 / CCUG 43141 / JCM 11478 / NBRC 16432 / NCIMB 13614 / HKI 0122).